Consider the following 292-residue polypeptide: 11-beta-hydroxysteroid dehydrogenase 1 (292 aa).

Residues alanine 2–tyrosine 7 lie on the Cytoplasmic side of the membrane. Residues leucine 8 to asparagine 24 traverse the membrane as a helical; Signal-anchor for type II membrane protein segment. The Lumenal portion of the chain corresponds to glutamate 25–asparagine 292. Residues glycine 41 to serine 67, threonine 92 to methionine 93, and asparagine 119 to isoleucine 121 contribute to the NADP(+) site. N-linked (GlcNAc...) asparagine glycans are attached at residues asparagine 123 and asparagine 162. Serine 170 lines the substrate pocket. Residue tyrosine 183 is the Proton acceptor of the active site. Residue tyrosine 183 to lysine 187 participates in NADP(+) binding. Asparagine 207 carries N-linked (GlcNAc...) asparagine glycosylation. Isoleucine 218–threonine 222 is an NADP(+) binding site.

It belongs to the short-chain dehydrogenases/reductases (SDR) family. As to quaternary structure, homodimer. In terms of processing, glycosylated. Expressed in the eye.

The protein localises to the endoplasmic reticulum membrane. It localises to the microsome membrane. It carries out the reaction an 11beta-hydroxysteroid + NADP(+) = an 11-oxosteroid + NADPH + H(+). The enzyme catalyses corticosterone + NADP(+) = 11-dehydrocorticosterone + NADPH + H(+). The catalysed reaction is cortisone + NADPH + H(+) = cortisol + NADP(+). It catalyses the reaction a 7beta-hydroxysteroid + NADP(+) = a 7-oxosteroid + NADPH + H(+). It carries out the reaction 7-oxocholesterol + NADPH + H(+) = 7beta-hydroxycholesterol + NADP(+). The enzyme catalyses chenodeoxycholate + NADP(+) = 7-oxolithocholate + NADPH + H(+). The catalysed reaction is 7-oxolithocholate + NADPH + H(+) = ursodeoxycholate + NADP(+). It catalyses the reaction glycochenodeoxycholate + NADP(+) = 7-oxoglycolithocholate + NADPH + H(+). It carries out the reaction taurochenodeoxycholate + NADP(+) = 7-oxotaurolithocholate + NADPH + H(+). The enzyme catalyses tauroursodeoxycholate + NADP(+) = 7-oxotaurolithocholate + NADPH + H(+). The catalysed reaction is glycoursodeoxycholate + NADP(+) = 7-oxoglycolithocholate + NADPH + H(+). It catalyses the reaction 7-oxopregnenolone + NADPH + H(+) = 7beta-hydroxypregnenolone + NADP(+). It carries out the reaction 3beta,7alpha-dihydroxyandrost-5-en-17-one + NADP(+) = 3beta-hydroxy-5-androstene-7,17-dione + NADPH + H(+). The enzyme catalyses 3beta-hydroxy-5-androstene-7,17-dione + NADPH + H(+) = 3beta,7beta-dihydroxyandrost-5-en-17-one + NADP(+). The catalysed reaction is 3beta-hydroxy-5alpha-androstane-7,17-dione + NADPH + H(+) = 3beta,7beta-dihydroxy-5alpha-androstan-17-one + NADP(+). It functions in the pathway steroid metabolism. Controls the reversible conversion of biologically active glucocorticoids such as cortisone to cortisol, and 11-dehydrocorticosterone to corticosterone in the presence of NADP(H). Participates in the corticosteroid receptor-mediated anti-inflammatory response, as well as metabolic and homeostatic processes. Plays a role in the secretion of aqueous humor in the eye, maintaining a normotensive, intraocular environment. Bidirectional in vitro, predominantly functions as a reductase in vivo, thereby increasing the concentration of active glucocorticoids. It has broad substrate specificity, besides glucocorticoids, it accepts other steroid and sterol substrates. It has broad substrate specificity, besides glucocorticoids, it accepts other steroid and sterol substrates. Interconverts 7-oxo- and 7-hydroxy-neurosteroids such as 7-oxopregnenolone and 7beta-hydroxypregnenolone, 7-oxodehydroepiandrosterone (3beta-hydroxy-5-androstene-7,17-dione) and 7beta-hydroxydehydroepiandrosterone (3beta,7beta-dihydroxyandrost-5-en-17-one), among others. Catalyzes the stereo-specific conversion of the major dietary oxysterol, 7-ketocholesterol (7-oxocholesterol), into the more polar 7-beta-hydroxycholesterol metabolite. 7-oxocholesterol is one of the most important oxysterols, it participates in several events such as induction of apoptosis, accumulation in atherosclerotic lesions, lipid peroxidation, and induction of foam cell formation. Mediates the 7-oxo reduction of 7-oxolithocholate mainly to chenodeoxycholate, and to a lesser extent to ursodeoxycholate, both in its free form and when conjugated to glycine or taurine, providing a link between glucocorticoid activation and bile acid metabolism. Catalyzes the synthesis of 7-beta-25-dihydroxycholesterol from 7-oxo-25-hydroxycholesterol in vitro, which acts as a ligand for the G-protein-coupled receptor (GPCR) Epstein-Barr virus-induced gene 2 (EBI2) and may thereby regulate immune cell migration. This is 11-beta-hydroxysteroid dehydrogenase 1 from Oryctolagus cuniculus (Rabbit).